Consider the following 1071-residue polypeptide: Methionine S-methyltransferase (1071 aa).

Alanine 2 carries the N-acetylalanine modification.

This sequence belongs to the class I-like SAM-binding methyltransferase superfamily. In terms of assembly, homotetramer. In terms of tissue distribution, expressed in roots, rosette leaves and cauline leaves. Expressed at a lower level in developing seeds.

The protein localises to the cytoplasm. The catalysed reaction is L-methionine + S-adenosyl-L-methionine = S-methyl-L-methionine + S-adenosyl-L-homocysteine. Functionally, catalyzes the S-methylmethionine (SMM) biosynthesis from adenosyl-L-homocysteine (AdoMet) and methionine. SMM biosynthesis (by MMT1) and degradation (by HMT-1, HMT-2 and HMT-3) constitute the SMM cycle in plants, which is probably required to achieve short term control of AdoMet level. Also able to catalyze the selenium-methylmethionine (SeMM) from AdoMet and selenium-methionine (SeMet). May play a role in phoem sulfur transport; such function is however not essential. The chain is Methionine S-methyltransferase (MMT1) from Arabidopsis thaliana (Mouse-ear cress).